The sequence spans 297 residues: Cbb3-type cytochrome c oxidase subunit CcoP (297 aa).

Over 1 to 35 the chain is Cytoplasmic; sequence MSKKPTTKKEVQTTGHSWDGIEELNTPLPRWWLWT. Residues 36 to 56 traverse the membrane as a helical segment; it reads FYATIVWGVAYSIAMPAWPIF. Over 57–297 the chain is Periplasmic; the sequence is ASGATPGILG…SYVHSLGGGQ (241 aa). Cytochrome c domains lie at 108 to 199 and 206 to 294; these read YTRN…LKIS and ARAT…HSLG. Residues Cys-121, Cys-124, His-125, Met-174, Cys-219, Cys-222, His-223, and Met-264 each contribute to the heme c site.

It belongs to the CcoP / FixP family. In terms of assembly, component of the cbb3-type cytochrome c oxidase at least composed of CcoN, CcoO, CcoQ and CcoP. Interacts with CcoH (via transmembrane domain). It depends on heme c as a cofactor.

The protein localises to the cell inner membrane. Its pathway is energy metabolism; oxidative phosphorylation. Its function is as follows. C-type cytochrome. Part of the cbb3-type cytochrome c oxidase complex. CcoP subunit is required for transferring electrons from donor cytochrome c via its heme groups to CcoO subunit. From there, electrons are shuttled to the catalytic binuclear center of CcoN subunit where oxygen reduction takes place. The complex also functions as a proton pump. The polypeptide is Cbb3-type cytochrome c oxidase subunit CcoP (Rhodobacter capsulatus (strain ATCC BAA-309 / NBRC 16581 / SB1003)).